The chain runs to 250 residues: MAEIAPLRVQLIAKTDFLAPPDVPWSTDADGGPALVEFAGRACYQSWSKPNPKTATNAGYIKHIIDVGHFSVLEHASVSFYITGISRSCTHELIRHRHFSYSQLSQRYVPENDSRVVVPPGLDDDPELQQILAAAADASRATYTELLARLEAKFADQPSAVLRRKQARQAARAVLPNATETRIVVTGNYRAWRHFIAMRASEHADVEIRRLAIECLRRLADVAPAVFADFEIATLADGTEVATSPLATEA.

The ThyX domain occupies 7 to 233; the sequence is LRVQLIAKTD…PAVFADFEIA (227 aa). Residues serine 71, 95–97, and glutamine 103 each bind FAD; that span reads RHR. Residues 92–95, 103–107, and arginine 172 each bind dUMP; these read ELIR and QLSQR. The ThyX motif motif lies at 95-105; the sequence is RHRHFSYSQLS. Residues 188 to 190 and histidine 194 contribute to the FAD site; that span reads NYR. Arginine 199 serves as a coordination point for dUMP. The active-site Involved in ionization of N3 of dUMP, leading to its activation is arginine 199.

The protein belongs to the thymidylate synthase ThyX family. In terms of assembly, homotetramer. Requires FAD as cofactor.

The enzyme catalyses dUMP + (6R)-5,10-methylene-5,6,7,8-tetrahydrofolate + NADPH + H(+) = dTMP + (6S)-5,6,7,8-tetrahydrofolate + NADP(+). It functions in the pathway pyrimidine metabolism; dTTP biosynthesis. Functionally, catalyzes the reductive methylation of 2'-deoxyuridine-5'-monophosphate (dUMP) to 2'-deoxythymidine-5'-monophosphate (dTMP) while utilizing 5,10-methylenetetrahydrofolate (mTHF) as the methyl donor, and NADPH and FADH(2) as the reductant. The sequence is that of Flavin-dependent thymidylate synthase from Mycobacterium avium (strain 104).